The sequence spans 218 residues: Cytidylate kinase (218 aa).

Residue Gly-11 to Thr-19 coordinates ATP.

This sequence belongs to the cytidylate kinase family. Type 1 subfamily.

The protein resides in the cytoplasm. It carries out the reaction CMP + ATP = CDP + ADP. It catalyses the reaction dCMP + ATP = dCDP + ADP. In Mycoplasmopsis synoviae (strain 53) (Mycoplasma synoviae), this protein is Cytidylate kinase.